The sequence spans 835 residues: Pre-mRNA-splicing factor SYF1 (835 aa).

HAT repeat units follow at residues 7–38 (YILD…HWEA), 46–77 (RSAR…WFRR), 313–348 (ADFD…FEQA), 414–456 (EDFD…VYWS), 458–494 (KSYE…NEFQ), 517–551 (SIID…LLES), 589–623 (NNLH…EVME), 628–664 (ATKE…FEIH), 707–741 (LGPD…LEMS), and 743–777 (SDYT…FELE).

This sequence belongs to the crooked-neck family. As to quaternary structure, associated with the spliceosome.

It localises to the nucleus. Its function is as follows. Involved in pre-mRNA splicing and cell cycle progression. The polypeptide is Pre-mRNA-splicing factor SYF1 (SYF1) (Candida glabrata (strain ATCC 2001 / BCRC 20586 / JCM 3761 / NBRC 0622 / NRRL Y-65 / CBS 138) (Yeast)).